A 171-amino-acid chain; its full sequence is Shikimate kinase (171 aa).

Gly14–Thr19 lines the ATP pocket. Ser18 provides a ligand contact to Mg(2+). 3 residues coordinate substrate: Asp36, Arg60, and Gly82. ATP is bound at residue Arg120. Arg139 lines the substrate pocket. Gln156 lines the ATP pocket.

It belongs to the shikimate kinase family. In terms of assembly, monomer. Requires Mg(2+) as cofactor.

It is found in the cytoplasm. The enzyme catalyses shikimate + ATP = 3-phosphoshikimate + ADP + H(+). The protein operates within metabolic intermediate biosynthesis; chorismate biosynthesis; chorismate from D-erythrose 4-phosphate and phosphoenolpyruvate: step 5/7. In terms of biological role, catalyzes the specific phosphorylation of the 3-hydroxyl group of shikimic acid using ATP as a cosubstrate. In Shewanella oneidensis (strain ATCC 700550 / JCM 31522 / CIP 106686 / LMG 19005 / NCIMB 14063 / MR-1), this protein is Shikimate kinase.